The following is a 410-amino-acid chain: Putative ribosomal large subunit pseudouridine synthase SVR1, chloroplastic (410 aa).

A chloroplast-targeting transit peptide spans 1 to 35 (MASVAASSSISFAASFLKIKAFPLSPRFFPIRTLR). Residues 96-143 (HNLAIDATTQNPKKKDKSKKKQPQATSSSSATTTASSPASHSEVKPKL) form a disordered region. The span at 107–117 (PKKKDKSKKKQ) shows a compositional bias: basic residues. Over residues 118-135 (PQATSSSSATTTASSPAS) the composition is skewed to low complexity. The S4 RNA-binding domain occupies 160-229 (QRLSKVLAAA…PKVYFALNKP (70 aa)). Residue Asp-274 is the Nucleophile of the active site.

Belongs to the pseudouridine synthase RsuA family. In terms of tissue distribution, highly expressed in young seedlings. Expressed in roots, rosette leaves, cauline leaves, stems and flowers.

The protein resides in the plastid. Its subcellular location is the chloroplast. Responsible for synthesis of pseudouridine in chloroplastic 23S ribosomal RNA. Necessary for normal chloroplast rRNA processing and translation. Required for normal chloroplast development and maintenance. May function in other plastids, such as root amyloplasts. In Arabidopsis thaliana (Mouse-ear cress), this protein is Putative ribosomal large subunit pseudouridine synthase SVR1, chloroplastic (SVR1).